Reading from the N-terminus, the 340-residue chain is DNA-directed RNA polymerase subunit alpha (340 aa).

The alpha N-terminal domain (alpha-NTD) stretch occupies residues 1–236 (MLSLSKNWNT…EQLQLFIAFE (236 aa)). Residues 251–340 (FSPYLLKRVD…LSKRYEDSYN (90 aa)) form an alpha C-terminal domain (alpha-CTD) region.

The protein belongs to the RNA polymerase alpha chain family. Homodimer. The RNAP catalytic core consists of 2 alpha, 1 beta, 1 beta' and 1 omega subunit. When a sigma factor is associated with the core the holoenzyme is formed, which can initiate transcription.

It carries out the reaction RNA(n) + a ribonucleoside 5'-triphosphate = RNA(n+1) + diphosphate. Functionally, DNA-dependent RNA polymerase catalyzes the transcription of DNA into RNA using the four ribonucleoside triphosphates as substrates. The polypeptide is DNA-directed RNA polymerase subunit alpha (Rickettsia typhi (strain ATCC VR-144 / Wilmington)).